Consider the following 247-residue polypeptide: PsbP domain-containing protein 3, chloroplastic (247 aa).

A chloroplast-targeting transit peptide spans 1–26; the sequence is MAAISPWLSSPQSFSNPRVTITDSRR. A thylakoid-targeting transit peptide spans 27–80; sequence CSSISAAISVLDSSNEEQHRISSRDHVGMKRRDVMLQIASSVFFLPLAISPAFA.

Belongs to the PsbP family.

The protein localises to the plastid. Its subcellular location is the chloroplast thylakoid lumen. In Arabidopsis thaliana (Mouse-ear cress), this protein is PsbP domain-containing protein 3, chloroplastic (PPD3).